Here is a 142-residue protein sequence, read N- to C-terminus: Hemoglobin subunit alpha-4 (142 aa).

Ser-1 bears the N-acetylserine mark. Positions 1–142 (SLSAKDKANV…LALALAEKYR (142 aa)) constitute a Globin domain. His-59 is an O2 binding site. His-88 lines the heme b pocket.

The protein belongs to the globin family. Heterotetramer of two alpha chains and two beta chains. Red blood cells.

Its function is as follows. Involved in oxygen transport from gills to the various peripheral tissues. In Oncorhynchus mykiss (Rainbow trout), this protein is Hemoglobin subunit alpha-4 (hba4).